Reading from the N-terminus, the 396-residue chain is Subtilisin-like protease 5 (396 aa).

A signal peptide spans 1-20; sequence MTGFLTILSLSLAALSVTNA. Residues 21 to 116 constitute a propeptide that is removed on maturation; that stretch reads AQILSVPQGA…VEPDAIIKQH (96 aa). Residues 37–114 form the Inhibitor I9 domain; the sequence is YIVVMKDDTS…AFVEPDAIIK (78 aa). A Peptidase S8 domain is found at 125–396; it reads PWGLSRLSNR…SRLLYNGSGR (272 aa). Residues Asp156 and His187 each act as charge relay system in the active site. N-linked (GlcNAc...) asparagine glycans are attached at residues Asn230 and Asn248. Ser342 (charge relay system) is an active-site residue. The interval 376 to 396 is disordered; sequence PTIRNPGPDTTSRLLYNGSGR. Asn392 is a glycosylation site (N-linked (GlcNAc...) asparagine).

Belongs to the peptidase S8 family.

The protein resides in the secreted. Functionally, secreted subtilisin-like serine protease with keratinolytic activity that contributes to pathogenicity. The polypeptide is Subtilisin-like protease 5 (SUB5) (Arthroderma gypseum (strain ATCC MYA-4604 / CBS 118893) (Microsporum gypseum)).